Here is a 147-residue protein sequence, read N- to C-terminus: 3-dehydroquinate dehydratase (147 aa).

The Proton acceptor role is filled by Y22. Substrate is bound by residues N73, H79, and D86. The active-site Proton donor is the H99. Substrate-binding positions include 100–101 and R110; that span reads LS.

The protein belongs to the type-II 3-dehydroquinase family. In terms of assembly, homododecamer.

The enzyme catalyses 3-dehydroquinate = 3-dehydroshikimate + H2O. It participates in metabolic intermediate biosynthesis; chorismate biosynthesis; chorismate from D-erythrose 4-phosphate and phosphoenolpyruvate: step 3/7. Its function is as follows. Catalyzes a trans-dehydration via an enolate intermediate. This is 3-dehydroquinate dehydratase from Synechococcus sp. (strain WH7803).